A 104-amino-acid polypeptide reads, in one-letter code: uncharacterized protein (104 aa).

The chain crosses the membrane as a helical span at residues 80–98; the sequence is GSSLPLFDLVFILLSTFFL.

Its subcellular location is the membrane. This is an uncharacterized protein from Saccharomyces cerevisiae (strain ATCC 204508 / S288c) (Baker's yeast).